Reading from the N-terminus, the 278-residue chain is Small ribosomal subunit biogenesis GTPase RsgA (278 aa).

The region spanning 62–218 (KNTLVRPKVV…ICDTPGFNVI (157 aa)) is the CP-type G domain. Residues 112-115 (TKND) and 162-170 (GQSGVGKSS) contribute to the GTP site. 4 residues coordinate Zn(2+): Cys-241, Cys-246, His-248, and Cys-254.

The protein belongs to the TRAFAC class YlqF/YawG GTPase family. RsgA subfamily. Monomer. Associates with 30S ribosomal subunit, binds 16S rRNA. Requires Zn(2+) as cofactor.

Its subcellular location is the cytoplasm. Its function is as follows. One of several proteins that assist in the late maturation steps of the functional core of the 30S ribosomal subunit. Helps release RbfA from mature subunits. May play a role in the assembly of ribosomal proteins into the subunit. Circularly permuted GTPase that catalyzes slow GTP hydrolysis, GTPase activity is stimulated by the 30S ribosomal subunit. This Mycoplasma pneumoniae (strain ATCC 29342 / M129 / Subtype 1) (Mycoplasmoides pneumoniae) protein is Small ribosomal subunit biogenesis GTPase RsgA.